The primary structure comprises 185 residues: Elongation factor P 1 (185 aa).

This sequence belongs to the elongation factor P family.

Its subcellular location is the cytoplasm. It functions in the pathway protein biosynthesis; polypeptide chain elongation. In terms of biological role, involved in peptide bond synthesis. Stimulates efficient translation and peptide-bond synthesis on native or reconstituted 70S ribosomes in vitro. Probably functions indirectly by altering the affinity of the ribosome for aminoacyl-tRNA, thus increasing their reactivity as acceptors for peptidyl transferase. This chain is Elongation factor P 1 (efp1), found in Chlamydia caviae (strain ATCC VR-813 / DSM 19441 / 03DC25 / GPIC) (Chlamydophila caviae).